The sequence spans 619 residues: Cationic amino acid transporter 3 (619 aa).

Topologically, residues Met-1 to Asp-36 are cytoplasmic. A helical membrane pass occupies residues Leu-37–Val-57. The Extracellular portion of the chain corresponds to Ala-58–Lys-61. A helical transmembrane segment spans residues Ala-62 to Leu-82. The Cytoplasmic portion of the chain corresponds to Cys-83–Glu-107. Residues Leu-108 to Val-128 traverse the membrane as a helical segment. The Extracellular segment spans residues Ala-129 to Glu-162. The chain crosses the membrane as a helical span at residues Tyr-163 to Ala-183. Topologically, residues Asn-184–Lys-191 are cytoplasmic. Residues Val-192–Gly-212 form a helical membrane-spanning segment. Topologically, residues Glu-213 to Gly-244 are extracellular. The N-linked (GlcNAc...) asparagine glycan is linked to Asn-232. Residues Phe-245–Val-265 traverse the membrane as a helical segment. The Cytoplasmic segment spans residues Gly-266–Pro-285. A helical membrane pass occupies residues Met-286 to Leu-306. The Extracellular segment spans residues Thr-307 to Tyr-335. A helical membrane pass occupies residues Leu-336–Met-356. The Cytoplasmic portion of the chain corresponds to Pro-357 to Thr-382. A helical membrane pass occupies residues Pro-383–Leu-403. At Thr-404–Leu-406 the chain is on the extracellular side. The helical transmembrane segment at Val-407 to Ile-427 threads the bilayer. The Cytoplasmic segment spans residues Leu-428–Arg-475. The chain crosses the membrane as a helical span at residues Ile-476 to Thr-496. Residues Trp-497–Pro-507 are Extracellular-facing. Residues Val-508–Trp-528 traverse the membrane as a helical segment. Residues Arg-529–Lys-540 are Cytoplasmic-facing. A helical transmembrane segment spans residues Val-541–Gln-561. The Extracellular segment spans residues Met-562–Arg-569. A helical transmembrane segment spans residues Phe-570 to Val-590. Residues Glu-591–Ile-619 are Cytoplasmic-facing. Residue Thr-606 is modified to Phosphothreonine. The residue at position 618 (Ser-618) is a Phosphoserine.

Belongs to the amino acid-polyamine-organocation (APC) superfamily. Cationic amino acid transporter (CAT) (TC 2.A.3.3) family. In terms of processing, N-glycosylated. As to expression, highly expressed in brain.

The protein localises to the cell membrane. It carries out the reaction L-arginine(in) = L-arginine(out). The enzyme catalyses L-lysine(in) = L-lysine(out). It catalyses the reaction L-ornithine(in) = L-ornithine(out). Its activity is regulated as follows. Inhibited by high potassium ions-induced membrane depolarization. In terms of biological role, uniporter that mediates the uptake of cationic L-amino acids such as L-arginine, L-lysine and L-ornithine. The transport is sodium ions- and pH-independent, moderately trans-stimulated and is mediated by passive diffusion. This Rattus norvegicus (Rat) protein is Cationic amino acid transporter 3.